We begin with the raw amino-acid sequence, 308 residues long: Elongation factor Ts (308 aa).

The interval 80–83 is involved in Mg(2+) ion dislocation from EF-Tu; that stretch reads TDFV.

Belongs to the EF-Ts family.

The protein localises to the cytoplasm. Functionally, associates with the EF-Tu.GDP complex and induces the exchange of GDP to GTP. It remains bound to the aminoacyl-tRNA.EF-Tu.GTP complex up to the GTP hydrolysis stage on the ribosome. The chain is Elongation factor Ts from Methylobacterium radiotolerans (strain ATCC 27329 / DSM 1819 / JCM 2831 / NBRC 15690 / NCIMB 10815 / 0-1).